The chain runs to 419 residues: UPF0761 membrane protein ACIAD3168 (419 aa).

The next 6 helical transmembrane spans lie at 42–62 (ALTY…LVII), 105–125 (LTVI…STIE), 148–168 (WTII…SSTV), 186–206 (AFIL…ILYW), 212–232 (TVPM…FELL), and 252–272 (AFAA…IVLL).

The protein belongs to the UPF0761 family.

The protein localises to the cell inner membrane. The protein is UPF0761 membrane protein ACIAD3168 of Acinetobacter baylyi (strain ATCC 33305 / BD413 / ADP1).